The chain runs to 116 residues: Phosphoribosyl-AMP cyclohydrolase (116 aa).

Aspartate 85 serves as a coordination point for Mg(2+). Cysteine 86 contributes to the Zn(2+) binding site. Mg(2+)-binding residues include aspartate 87 and aspartate 89. Zn(2+) is bound by residues cysteine 102 and cysteine 109.

The protein belongs to the PRA-CH family. In terms of assembly, homodimer. Requires Mg(2+) as cofactor. Zn(2+) is required as a cofactor.

It is found in the cytoplasm. It carries out the reaction 1-(5-phospho-beta-D-ribosyl)-5'-AMP + H2O = 1-(5-phospho-beta-D-ribosyl)-5-[(5-phospho-beta-D-ribosylamino)methylideneamino]imidazole-4-carboxamide. Its pathway is amino-acid biosynthesis; L-histidine biosynthesis; L-histidine from 5-phospho-alpha-D-ribose 1-diphosphate: step 3/9. In terms of biological role, catalyzes the hydrolysis of the adenine ring of phosphoribosyl-AMP. The chain is Phosphoribosyl-AMP cyclohydrolase from Corynebacterium diphtheriae (strain ATCC 700971 / NCTC 13129 / Biotype gravis).